A 102-amino-acid polypeptide reads, in one-letter code: Large ribosomal subunit protein uL23 (102 aa).

It belongs to the universal ribosomal protein uL23 family. Part of the 50S ribosomal subunit. Contacts protein L29, and trigger factor when it is bound to the ribosome.

In terms of biological role, one of the early assembly proteins it binds 23S rRNA. One of the proteins that surrounds the polypeptide exit tunnel on the outside of the ribosome. Forms the main docking site for trigger factor binding to the ribosome. The polypeptide is Large ribosomal subunit protein uL23 (Chromobacterium violaceum (strain ATCC 12472 / DSM 30191 / JCM 1249 / CCUG 213 / NBRC 12614 / NCIMB 9131 / NCTC 9757 / MK)).